The following is a 641-amino-acid chain: Methylenetetrahydrofolate reductase 2 (641 aa).

Glutamate 20 (proton donor/acceptor) is an active-site residue. NAD(+) is bound by residues 20–25 and 52–53; these read EYFPPK and TW. FAD contacts are provided by residues 52-53, histidine 81, 111-113, tyrosine 153, aspartate 172, and lysine 179; these read TW and RGD. Aspartate 113 provides a ligand contact to substrate. Glutamine 190 contacts substrate.

This sequence belongs to the methylenetetrahydrofolate reductase family. FAD is required as a cofactor.

The enzyme catalyses (6S)-5-methyl-5,6,7,8-tetrahydrofolate + NADP(+) = (6R)-5,10-methylene-5,6,7,8-tetrahydrofolate + NADPH + H(+). It functions in the pathway one-carbon metabolism; tetrahydrofolate interconversion. Its function is as follows. Major methylenetetrahydrofolate reductase required to generate the methyl groups necessary for methionine synthetase to convert homocysteine to methionine. Performs 15 to 20 percent of the total methylenetetrahydrofolate reductase activity of the cells. This Schizosaccharomyces pombe (strain 972 / ATCC 24843) (Fission yeast) protein is Methylenetetrahydrofolate reductase 2 (met11).